The following is a 522-amino-acid chain: MTDFAARLKKVASNPEVFKQFGRGVERETLRYRQDGHLATTPHPEGLGSAFTNKWITTDFSESLLEFITPVSHDIPELMAQLKDIHHFTQTKMGEEKMWPLSMPCYVGSEDDIQLAQYGSSNSAKMKTLYREGLKRRYGSLMQIISGVHFNFSFPESFWDALYGEQDEQARQDTKSAAYFALIRNYYRFGWMIPYFFGASPALCGSFIQGRETKLPFESIGGTLYLPKATSLRLSDLGYTNSAQSVLKIGFNSIDQYLEGLGDAIRRPSEEFAKIGVKVDGEYRQLNTNILQIENELYAPIRPKRVAKSGEKPSDALSRAGVEYIEVRSLDVNPFSAVGVSEEQVRFLDLFLTWAALSDSDPMDNCELECWRDNWNKVIISGREKGLMLQIGCQGERLSLQDWAKRVFVELRQIAVEMDSAAGGDAYQAVCDKLEAWIDNPELTISGQLLELTKELGGLGKVGCALGMKFREENLAHGYQHYSQDIMETEVASSVEKQRKAEESDTLSFDEFLENYFAYLKQ.

It belongs to the glutamate--cysteine ligase type 1 family. Type 1 subfamily.

It catalyses the reaction L-cysteine + L-glutamate + ATP = gamma-L-glutamyl-L-cysteine + ADP + phosphate + H(+). Its pathway is sulfur metabolism; glutathione biosynthesis; glutathione from L-cysteine and L-glutamate: step 1/2. The protein is Glutamate--cysteine ligase of Vibrio parahaemolyticus serotype O3:K6 (strain RIMD 2210633).